Consider the following 119-residue polypeptide: Large ribosomal subunit protein bL19 (119 aa).

This sequence belongs to the bacterial ribosomal protein bL19 family.

Functionally, this protein is located at the 30S-50S ribosomal subunit interface and may play a role in the structure and function of the aminoacyl-tRNA binding site. The chain is Large ribosomal subunit protein bL19 from Arthrobacter sp. (strain FB24).